The chain runs to 624 residues: Acidic juvenile hormone-suppressible protein 1 (624 aa).

An N-terminal signal peptide occupies residues 1-18 (MARLVLCALALLVAGGLA). Residues N75 and N478 are each glycosylated (N-linked (GlcNAc...) asparagine).

This sequence belongs to the hemocyanin family.

The protein localises to the secreted. Its subcellular location is the extracellular space. The chain is Acidic juvenile hormone-suppressible protein 1 (AJSP-1) from Trichoplusia ni (Cabbage looper).